A 153-amino-acid chain; its full sequence is uncharacterized protein (153 aa).

This is an uncharacterized protein from Escherichia coli (strain K12).